We begin with the raw amino-acid sequence, 75 residues long: Small ribosomal subunit protein bS18c (75 aa).

The protein belongs to the bacterial ribosomal protein bS18 family. As to quaternary structure, part of the 30S ribosomal subunit.

The protein localises to the plastid. The sequence is that of Small ribosomal subunit protein bS18c from Aneura mirabilis (Parasitic liverwort).